The chain runs to 31 residues: Cyclotide mech-4 (31 aa).

A cross-link (cyclopeptide (Gly-Asp)) is located at residues 1-31 (GSIPCGESCVYIPCISSLLGCSCKSKVCYKD). 3 disulfide bridges follow: Cys5–Cys21, Cys9–Cys23, and Cys14–Cys28.

This is a cyclic peptide. In terms of processing, contains 3 disulfide bonds.

Probably participates in a plant defense mechanism (Potential). Binds to and induces leakage in phospholipd membranes, particularly ones containing 1-palmitoyl-2-oleophosphatidylethanolamine (POPE). This is Cyclotide mech-4 from Melicytus chathamicus (Chatham Island mahoe).